The chain runs to 556 residues: Glucomannan 4-beta-mannosyltransferase 7 (556 aa).

The chain crosses the membrane as a helical span at residues 58 to 78 (VVVPVFKFLVLLCLVMSVMFF). D158 is a catalytic residue. Residues D217 and D219 each contribute to the substrate site. The active site involves D311. 4 consecutive transmembrane segments (helical) span residues 390-410 (IVAHILTFCFYCVILPATVLF), 426-448 (LITLLIAIGRLRSIHLLAFWVLF), 502-522 (LLELLVGAYLLFCGIYDIVYG), and 526-546 (LYVYLLFQSVAFFVVGFGFVG).

This sequence belongs to the glycosyltransferase 2 family. Plant cellulose synthase-like A subfamily. As to expression, ubiquitous.

The protein resides in the golgi apparatus membrane. It carries out the reaction GDP-mannose + (glucomannan)n = GDP + (glucomannan)n+1.. Its function is as follows. Probable mannan synthase which consists of a 4-beta-mannosyltransferase activity on mannan using GDP-mannose. The beta-1,4-mannan product is the backbone for galactomannan synthesis by galactomannan galactosyltransferase. Galactomannan is a noncellulosic polysaccharides of plant cell wall. Required for synthesis of a cell wall polysaccharide essential for pollen tube growth, for cell wall structure, or for signaling during plant embryo development. The chain is Glucomannan 4-beta-mannosyltransferase 7 from Arabidopsis thaliana (Mouse-ear cress).